The following is a 521-amino-acid chain: MIKQALISVSDKTGIVDFAKSLSDLGVKLLSTGGTAKLLADAGLPVTEVADYTGFPEMLDGRVKTLHPKVHGGILARRDLPEHMQALEQHGIPTIDLLVVNLYPFVATIAKDDCTLADAIENIDIGGPTMLRSAAKNHRDVTVVVDPADYAVVLDEMKANGNAVGYATNFRLATKVFAHTAQYDGAITNYLTSLTDELKHASRSAYPATLNLAFDKVQDLRYGENPHQSAAFYRDLATPAGALANYRQLQGKELSYNNIADSDAAWECVKTFDAPACVIIKHANPCGVAVGNDSADAYAKAFQTDPTSAFGGIIAFNREVDEAAAQAVAKQFVEVLIAPSFSDAAKQVFAAKQNVRLLEIALGDGHNAFDLKRVGGGLLVQSLDSKNVQPSELRVVTKRQPTAKEMDDLLFAWRVAKYVKSNAIVFCGNGMTLGVGAGQMSRVDSARIASIKAQNAGLTLAGSAVASDAFFPFRDGLDVVVAAGATCVIQPGGSMRDDEVIAAADEHNIAMILTGVRHFRH.

One can recognise an MGS-like domain in the interval 1-145 (MIKQALISVS…KNHRDVTVVV (145 aa)).

This sequence belongs to the PurH family.

It carries out the reaction (6R)-10-formyltetrahydrofolate + 5-amino-1-(5-phospho-beta-D-ribosyl)imidazole-4-carboxamide = 5-formamido-1-(5-phospho-D-ribosyl)imidazole-4-carboxamide + (6S)-5,6,7,8-tetrahydrofolate. The enzyme catalyses IMP + H2O = 5-formamido-1-(5-phospho-D-ribosyl)imidazole-4-carboxamide. Its pathway is purine metabolism; IMP biosynthesis via de novo pathway; 5-formamido-1-(5-phospho-D-ribosyl)imidazole-4-carboxamide from 5-amino-1-(5-phospho-D-ribosyl)imidazole-4-carboxamide (10-formyl THF route): step 1/1. It functions in the pathway purine metabolism; IMP biosynthesis via de novo pathway; IMP from 5-formamido-1-(5-phospho-D-ribosyl)imidazole-4-carboxamide: step 1/1. This is Bifunctional purine biosynthesis protein PurH from Burkholderia lata (strain ATCC 17760 / DSM 23089 / LMG 22485 / NCIMB 9086 / R18194 / 383).